The primary structure comprises 224 residues: 7-cyano-7-deazaguanine synthase (224 aa).

Position 10–20 (10–20 (VSGGLDSATVL)) interacts with ATP. The Zn(2+) site is built by Cys-189, Cys-199, Cys-202, and Cys-205.

It belongs to the QueC family. Requires Zn(2+) as cofactor.

The catalysed reaction is 7-carboxy-7-deazaguanine + NH4(+) + ATP = 7-cyano-7-deazaguanine + ADP + phosphate + H2O + H(+). It participates in purine metabolism; 7-cyano-7-deazaguanine biosynthesis. Its function is as follows. Catalyzes the ATP-dependent conversion of 7-carboxy-7-deazaguanine (CDG) to 7-cyano-7-deazaguanine (preQ(0)). This is 7-cyano-7-deazaguanine synthase from Nitrosococcus oceani (strain ATCC 19707 / BCRC 17464 / JCM 30415 / NCIMB 11848 / C-107).